The primary structure comprises 182 residues: Crossover junction endodeoxyribonuclease RuvC (182 aa).

Catalysis depends on residues D7, E69, and D141. Mg(2+) contacts are provided by D7, E69, and D141.

Belongs to the RuvC family. Homodimer which binds Holliday junction (HJ) DNA. The HJ becomes 2-fold symmetrical on binding to RuvC with unstacked arms; it has a different conformation from HJ DNA in complex with RuvA. In the full resolvosome a probable DNA-RuvA(4)-RuvB(12)-RuvC(2) complex forms which resolves the HJ. Mg(2+) serves as cofactor.

The protein localises to the cytoplasm. It carries out the reaction Endonucleolytic cleavage at a junction such as a reciprocal single-stranded crossover between two homologous DNA duplexes (Holliday junction).. The RuvA-RuvB-RuvC complex processes Holliday junction (HJ) DNA during genetic recombination and DNA repair. Endonuclease that resolves HJ intermediates. Cleaves cruciform DNA by making single-stranded nicks across the HJ at symmetrical positions within the homologous arms, yielding a 5'-phosphate and a 3'-hydroxyl group; requires a central core of homology in the junction. The consensus cleavage sequence is 5'-(A/T)TT(C/G)-3'. Cleavage occurs on the 3'-side of the TT dinucleotide at the point of strand exchange. HJ branch migration catalyzed by RuvA-RuvB allows RuvC to scan DNA until it finds its consensus sequence, where it cleaves and resolves the cruciform DNA. This Delftia acidovorans (strain DSM 14801 / SPH-1) protein is Crossover junction endodeoxyribonuclease RuvC.